Consider the following 89-residue polypeptide: Small ribosomal subunit protein uS15 (89 aa).

Belongs to the universal ribosomal protein uS15 family. As to quaternary structure, part of the 30S ribosomal subunit. Forms a bridge to the 50S subunit in the 70S ribosome, contacting the 23S rRNA.

Its function is as follows. One of the primary rRNA binding proteins, it binds directly to 16S rRNA where it helps nucleate assembly of the platform of the 30S subunit by binding and bridging several RNA helices of the 16S rRNA. Forms an intersubunit bridge (bridge B4) with the 23S rRNA of the 50S subunit in the ribosome. This chain is Small ribosomal subunit protein uS15, found in Cellvibrio japonicus (strain Ueda107) (Pseudomonas fluorescens subsp. cellulosa).